The chain runs to 317 residues: Melanocyte-stimulating hormone receptor (317 aa).

Residues 1-37 (MPALGSQRRLLGSLNCTPPATLPFTLAPNRTGPQCLE) lie on the Extracellular side of the membrane. A glycan (N-linked (GlcNAc...) asparagine) is linked at N29. The chain crosses the membrane as a helical span at residues 38–63 (VSIPDGLFLSLGLVSLVENVLVVAAI). The Cytoplasmic portion of the chain corresponds to 64–72 (AKNRNLHSP). Residues 73–93 (MYYFICCLAVSDLLVSVSNVL) traverse the membrane as a helical segment. At 94–118 (ETAVMLLLEAGVLATQAAVVQQLDN) the chain is on the extracellular side. Residues 119–140 (VIDVLICGSMVSSLCFLGAIAV) traverse the membrane as a helical segment. Topologically, residues 141–163 (DRYISIFYALRYHSVVTLPRAWR) are cytoplasmic. A helical transmembrane segment spans residues 164–183 (IIAAIWVASILTSLLFITYY). The Extracellular portion of the chain corresponds to 184–191 (NHKVILLC). Residues 192 to 211 (LVGLFIAMLALMAVLYVHML) traverse the membrane as a helical segment. Residues 212 to 240 (ARACQHARGIARLQKRQRPIHQGFGLKGA) lie on the Cytoplasmic side of the membrane. A helical membrane pass occupies residues 241-266 (ATLTILLGVFFLCWGPFFLHLSLIVL). Topologically, residues 267–279 (CPQHPTCGCIFKN) are extracellular. A helical transmembrane segment spans residues 280 to 300 (FNLFLALIICNAIVDPLIYAF). At 301–317 (RSQELRKTLQEVLQCSW) the chain is on the cytoplasmic side. C315 carries the S-palmitoyl cysteine lipid modification.

This sequence belongs to the G-protein coupled receptor 1 family. In terms of assembly, interacts with MGRN1, but does not undergo MGRN1-mediated ubiquitination; this interaction competes with GNAS-binding and thus inhibits agonist-induced cAMP production. Interacts with OPN3; the interaction results in a decrease in MC1R-mediated cAMP signaling and ultimately a decrease in melanin production in melanocytes. As to expression, highly expressed in the testis.

It localises to the cell membrane. Functionally, receptor for MSH (alpha, beta) and ACTH. Does not seem to be active with gamma-MSH. The activity of this receptor is mediated by G proteins which activate adenylate cyclase. Mediates melanogenesis, the production of eumelanin (black/brown) and phaeomelanin (red/yellow), via regulation of cAMP signaling in melanocytes. The sequence is that of Melanocyte-stimulating hormone receptor (MC1R) from Bos taurus (Bovine).